The sequence spans 586 residues: Arginine--tRNA ligase (586 aa).

The 'HIGH' region motif lies at 131 to 141; it reads ANPTGPMHVGH.

Belongs to the class-I aminoacyl-tRNA synthetase family. As to quaternary structure, monomer.

The protein localises to the cytoplasm. The enzyme catalyses tRNA(Arg) + L-arginine + ATP = L-arginyl-tRNA(Arg) + AMP + diphosphate. This Azorhizobium caulinodans (strain ATCC 43989 / DSM 5975 / JCM 20966 / LMG 6465 / NBRC 14845 / NCIMB 13405 / ORS 571) protein is Arginine--tRNA ligase.